The primary structure comprises 176 residues: RNA pyrophosphohydrolase (176 aa).

Positions 8 to 159 constitute a Nudix hydrolase domain; it reads PYRTCVGMML…KRPVYERVVK (152 aa). Positions 47 to 68 match the Nudix box motif; sequence GGVDPGEDTWAAAKRELYEETS.

The protein belongs to the Nudix hydrolase family. RppH subfamily. A divalent metal cation serves as cofactor.

In terms of biological role, accelerates the degradation of transcripts by removing pyrophosphate from the 5'-end of triphosphorylated RNA, leading to a more labile monophosphorylated state that can stimulate subsequent ribonuclease cleavage. The sequence is that of RNA pyrophosphohydrolase from Rhodopseudomonas palustris (strain BisA53).